The sequence spans 462 residues: UDP-N-acetylmuramate--L-alanine ligase (462 aa).

An ATP-binding site is contributed by 116–122; it reads GAHGKTT.

Belongs to the MurCDEF family.

It is found in the cytoplasm. It carries out the reaction UDP-N-acetyl-alpha-D-muramate + L-alanine + ATP = UDP-N-acetyl-alpha-D-muramoyl-L-alanine + ADP + phosphate + H(+). It functions in the pathway cell wall biogenesis; peptidoglycan biosynthesis. Its function is as follows. Cell wall formation. In Desulforamulus reducens (strain ATCC BAA-1160 / DSM 100696 / MI-1) (Desulfotomaculum reducens), this protein is UDP-N-acetylmuramate--L-alanine ligase.